We begin with the raw amino-acid sequence, 153 residues long: Cell division protein SepF (153 aa).

It belongs to the SepF family. In terms of assembly, homodimer. Interacts with FtsZ.

The protein localises to the cytoplasm. Cell division protein that is part of the divisome complex and is recruited early to the Z-ring. Probably stimulates Z-ring formation, perhaps through the cross-linking of FtsZ protofilaments. Its function overlaps with FtsA. The sequence is that of Cell division protein SepF from Clostridium novyi (strain NT).